Consider the following 70-residue polypeptide: Protein SlyX homolog (70 aa).

The protein belongs to the SlyX family.

In Shewanella loihica (strain ATCC BAA-1088 / PV-4), this protein is Protein SlyX homolog.